The primary structure comprises 343 residues: Holliday junction branch migration complex subunit RuvB (343 aa).

The segment at 1 to 181 (MDRIVEIEKV…FGMQFRLQFY (181 aa)) is large ATPase domain (RuvB-L). Residues L20, R21, G62, K65, T66, T67, 128 to 130 (EDF), R171, Y181, and R218 contribute to the ATP site. T66 is a binding site for Mg(2+). The small ATPAse domain (RuvB-S) stretch occupies residues 182–252 (TDNELARIIS…RAKSSLDSLG (71 aa)). The tract at residues 255–343 (DLGFDEMDLK…EKQNKGLFNE (89 aa)) is head domain (RuvB-H). Positions 308 and 313 each coordinate DNA.

Belongs to the RuvB family. Homohexamer. Forms an RuvA(8)-RuvB(12)-Holliday junction (HJ) complex. HJ DNA is sandwiched between 2 RuvA tetramers; dsDNA enters through RuvA and exits via RuvB. An RuvB hexamer assembles on each DNA strand where it exits the tetramer. Each RuvB hexamer is contacted by two RuvA subunits (via domain III) on 2 adjacent RuvB subunits; this complex drives branch migration. In the full resolvosome a probable DNA-RuvA(4)-RuvB(12)-RuvC(2) complex forms which resolves the HJ.

Its subcellular location is the cytoplasm. It carries out the reaction ATP + H2O = ADP + phosphate + H(+). The RuvA-RuvB-RuvC complex processes Holliday junction (HJ) DNA during genetic recombination and DNA repair, while the RuvA-RuvB complex plays an important role in the rescue of blocked DNA replication forks via replication fork reversal (RFR). RuvA specifically binds to HJ cruciform DNA, conferring on it an open structure. The RuvB hexamer acts as an ATP-dependent pump, pulling dsDNA into and through the RuvAB complex. RuvB forms 2 homohexamers on either side of HJ DNA bound by 1 or 2 RuvA tetramers; 4 subunits per hexamer contact DNA at a time. Coordinated motions by a converter formed by DNA-disengaged RuvB subunits stimulates ATP hydrolysis and nucleotide exchange. Immobilization of the converter enables RuvB to convert the ATP-contained energy into a lever motion, pulling 2 nucleotides of DNA out of the RuvA tetramer per ATP hydrolyzed, thus driving DNA branch migration. The RuvB motors rotate together with the DNA substrate, which together with the progressing nucleotide cycle form the mechanistic basis for DNA recombination by continuous HJ branch migration. Branch migration allows RuvC to scan DNA until it finds its consensus sequence, where it cleaves and resolves cruciform DNA. This Campylobacter fetus subsp. fetus (strain 82-40) protein is Holliday junction branch migration complex subunit RuvB.